Consider the following 486-residue polypeptide: Cardiolipin synthase A (486 aa).

Transmembrane regions (helical) follow at residues 3-23 and 38-58; these read TVYTLVSWLAILGYWLLIAGV and MAWLLIIYILPLVGIIAYLAV. PLD phosphodiesterase domains follow at residues 219–246 and 399–426; these read MDLRQHRKMIMIDNYIAYTGSMNMVDPR and EGGLLHTKSVLVDGELSLVGTVNLDMRS. Active-site residues include His-224, Lys-226, Asp-231, His-404, Lys-406, and Asp-411.

This sequence belongs to the phospholipase D family. Cardiolipin synthase subfamily. ClsA sub-subfamily.

The protein resides in the cell inner membrane. It carries out the reaction 2 a 1,2-diacyl-sn-glycero-3-phospho-(1'-sn-glycerol) = a cardiolipin + glycerol. In terms of biological role, catalyzes the reversible phosphatidyl group transfer from one phosphatidylglycerol molecule to another to form cardiolipin (CL) (diphosphatidylglycerol) and glycerol. The protein is Cardiolipin synthase A of Escherichia coli O7:K1 (strain IAI39 / ExPEC).